We begin with the raw amino-acid sequence, 103 residues long: MRATTAFQVIAFLAVGAAAAPTGLVQARAVDSLAVETDDIASSAGPRADDNGAASAGLKVKRQREYWCPNQVCAKTFATQEERDHHIANTVHPTNSKRDVLLQ.

The first 19 residues, 1–19, serve as a signal peptide directing secretion; sequence MRATTAFQVIAFLAVGAAA. The C2H2-type zinc finger occupies 66-92; sequence YWCPNQVCAKTFATQEERDHHIANTVH. Positions 82–103 are disordered; it reads ERDHHIANTVHPTNSKRDVLLQ.

The protein resides in the secreted. It localises to the host nucleus. Functionally, probable secreted effector that translocates into the nuclei of host cells to reprogram the expression of targeted genes by binding on effector binding elements in rice. This is Host transcription reprogramming factor 6 from Pyricularia oryzae (strain 70-15 / ATCC MYA-4617 / FGSC 8958) (Rice blast fungus).